The chain runs to 74 residues: Kappa-scoloptoxin(07)-Ssm2e (74 aa).

The signal sequence occupies residues 1–19 (MLVFYALLFVSVFSNTVMG). A propeptide spanning residues 20 to 41 (ATIDMPIPKPILREAIEEIDVN) is cleaved from the precursor.

The protein belongs to the scoloptoxin-07 family. In terms of processing, contains 3 disulfide bonds. As to expression, expressed by the venom gland.

The protein localises to the secreted. In terms of biological role, inhibits voltage-gated potassium channels. This Scolopendra mutilans (Chinese red-headed centipede) protein is Kappa-scoloptoxin(07)-Ssm2e.